The sequence spans 321 residues: Epoxyqueuosine reductase (321 aa).

The active-site Proton donor is the D137. The 33-residue stretch at 179–211 folds into the 4Fe-4S ferredoxin-type domain; it reads EPLNADPPARSLCGRCSACIDACPTHAIREPFV. Positions 191, 194, 197, 201, 217, 245, 248, and 252 each coordinate [4Fe-4S] cluster.

It belongs to the QueG family. As to quaternary structure, monomer. The cofactor is cob(II)alamin. [4Fe-4S] cluster is required as a cofactor.

It is found in the cytoplasm. It catalyses the reaction epoxyqueuosine(34) in tRNA + AH2 = queuosine(34) in tRNA + A + H2O. The protein operates within tRNA modification; tRNA-queuosine biosynthesis. Catalyzes the conversion of epoxyqueuosine (oQ) to queuosine (Q), which is a hypermodified base found in the wobble positions of tRNA(Asp), tRNA(Asn), tRNA(His) and tRNA(Tyr). This Synechococcus sp. (strain CC9605) protein is Epoxyqueuosine reductase.